The primary structure comprises 217 residues: Putative oxidative stress regulator AosR (217 aa).

A CXXXC motif is present at residues 5-9 (CGRRC). A disulfide bridge connects residues C5 and C9.

This sequence belongs to the AosR family.

The chain is Putative oxidative stress regulator AosR from Mycobacterium leprae (strain TN).